Consider the following 155-residue polypeptide: Endoribonuclease YbeY (155 aa).

Zn(2+)-binding residues include histidine 117, histidine 121, and histidine 127.

It belongs to the endoribonuclease YbeY family. Zn(2+) is required as a cofactor.

It localises to the cytoplasm. In terms of biological role, single strand-specific metallo-endoribonuclease involved in late-stage 70S ribosome quality control and in maturation of the 3' terminus of the 16S rRNA. This Dichelobacter nodosus (strain VCS1703A) protein is Endoribonuclease YbeY.